Here is a 349-residue protein sequence, read N- to C-terminus: Bifunctional protein FolKE (349 aa).

The interval 1–226 (MQTTYLSMGS…LFEIDSSKTD (226 aa)) is 2-amino-4-hydroxy-6-hydroxymethyldihydropteridine pyrophosphokinase. The segment at 226 to 349 (DSIVLIKDIP…KRMEFLESLL (124 aa)) is GTP cyclohydrolase 1.

The protein in the N-terminal section; belongs to the HPPK family. It in the C-terminal section; belongs to the GTP cyclohydrolase I family. Homomer.

The catalysed reaction is 6-hydroxymethyl-7,8-dihydropterin + ATP = (7,8-dihydropterin-6-yl)methyl diphosphate + AMP + H(+). It carries out the reaction GTP + H2O = 7,8-dihydroneopterin 3'-triphosphate + formate + H(+). It functions in the pathway cofactor biosynthesis; 7,8-dihydroneopterin triphosphate biosynthesis; 7,8-dihydroneopterin triphosphate from GTP: step 1/1. Its pathway is cofactor biosynthesis; tetrahydrofolate biosynthesis; 2-amino-4-hydroxy-6-hydroxymethyl-7,8-dihydropteridine diphosphate from 7,8-dihydroneopterin triphosphate: step 4/4. This is Bifunctional protein FolKE (folKE) from Lactococcus lactis subsp. lactis (strain IL1403) (Streptococcus lactis).